The sequence spans 178 residues: CDP-archaeol synthase (178 aa).

The next 5 membrane-spanning stretches (helical) occupy residues 3–23 (LLLL…ANAV), 56–76 (FFGI…VILY), 91–111 (IILG…GSFI), 123–143 (APLL…YPLY), and 149–169 (LMVI…IIAY).

Belongs to the CDP-archaeol synthase family. Mg(2+) serves as cofactor.

Its subcellular location is the cell membrane. It catalyses the reaction 2,3-bis-O-(geranylgeranyl)-sn-glycerol 1-phosphate + CTP + H(+) = CDP-2,3-bis-O-(geranylgeranyl)-sn-glycerol + diphosphate. It functions in the pathway membrane lipid metabolism; glycerophospholipid metabolism. Its function is as follows. Catalyzes the formation of CDP-2,3-bis-(O-geranylgeranyl)-sn-glycerol (CDP-archaeol) from 2,3-bis-(O-geranylgeranyl)-sn-glycerol 1-phosphate (DGGGP) and CTP. This reaction is the third ether-bond-formation step in the biosynthesis of archaeal membrane lipids. The protein is CDP-archaeol synthase of Methanococcus maripaludis (strain C7 / ATCC BAA-1331).